The following is a 318-amino-acid chain: Extracellular metalloprotease AO090012001025 (318 aa).

The N-terminal stretch at 1 to 23 (MSHFPTLHILILVIANLQIQCFA) is a signal peptide. 3 N-linked (GlcNAc...) asparagine glycosylation sites follow: N106, N121, and N193. H229 contributes to the Zn(2+) binding site. The active site involves E230. H233 lines the Zn(2+) pocket. C268 and C295 are disulfide-bonded.

It belongs to the peptidase M43B family.

The protein localises to the secreted. Secreted metalloproteinase that allows assimilation of proteinaceous substrates. The protein is Extracellular metalloprotease AO090012001025 of Aspergillus oryzae (strain ATCC 42149 / RIB 40) (Yellow koji mold).